A 455-amino-acid chain; its full sequence is Membrane protein Pbs54 (455 aa).

The helical transmembrane segment at 12 to 32 (IISIIILILRISLFSCAEHLF) threads the bilayer. Asn41, Asn102, and Asn125 each carry an N-linked (GlcNAc...) asparagine glycan. 6 helical membrane-spanning segments follow: residues 181–201 (IFLI…LFNG), 220–240 (FIFF…LSCI), 244–264 (ILTF…FYLF), 285–305 (ILIG…IIFI), 312–332 (FLVK…IFFL), and 346–366 (FVFS…FWNI). The N-linked (GlcNAc...) asparagine glycan is linked to Asn373. Residues 398 to 418 (NMFALFMIFAMSILSIIFPRI) form a helical membrane-spanning segment.

Its subcellular location is the cell projection. It is found in the cilium. It localises to the flagellum. The protein localises to the cell membrane. In terms of biological role, plays a role in gamete fertilization. Required for the successful transmission of parasites to mosquito. The polypeptide is Membrane protein Pbs54 (Plasmodium berghei (strain Anka)).